Here is a 186-residue protein sequence, read N- to C-terminus: Threonylcarbamoyl-AMP synthase (186 aa).

The 182-residue stretch at 5 to 186 (TQSINDAVKC…DAITGEILRL (182 aa)) folds into the YrdC-like domain.

The protein belongs to the SUA5 family. TsaC subfamily.

It is found in the cytoplasm. It catalyses the reaction L-threonine + hydrogencarbonate + ATP = L-threonylcarbamoyladenylate + diphosphate + H2O. Functionally, required for the formation of a threonylcarbamoyl group on adenosine at position 37 (t(6)A37) in tRNAs that read codons beginning with adenine. Catalyzes the conversion of L-threonine, HCO(3)(-)/CO(2) and ATP to give threonylcarbamoyl-AMP (TC-AMP) as the acyladenylate intermediate, with the release of diphosphate. This is Threonylcarbamoyl-AMP synthase from Coxiella burnetii (strain RSA 493 / Nine Mile phase I).